The sequence spans 65 residues: Putative primary metabolism protein prl65 (65 aa).

Residues 1 to 25 (MTKYSKGNKVEYHPIGGPSGTSTST) are disordered.

Its function is as follows. May play a role in primary metabolism. The sequence is that of Putative primary metabolism protein prl65 from Schizosaccharomyces pombe (strain 972 / ATCC 24843) (Fission yeast).